Consider the following 503-residue polypeptide: Variant surface glycoprotein ILTAT 1.3 (503 aa).

The N-terminal stretch at 1–29 (MTKAYENRMLLQALVLAAVLCTTHAEGTA) is a signal peptide. 2 cysteine pairs are disulfide-bonded: Cys42–Cys168 and Cys150–Cys206. Residues Asn419 and Asn432 are each glycosylated (N-linked (GlcNAc...) asparagine). Asp480 carries GPI-anchor amidated aspartate lipidation. The propeptide at 481–503 (SSFILNKQFALSVVSAAFAALLF) is removed in mature form.

The protein resides in the cell membrane. In terms of biological role, VSG forms a coat on the surface of the parasite. The trypanosome evades the immune response of the host by expressing a series of antigenically distinct VSGs from an estimated 1000 VSG genes. The sequence is that of Variant surface glycoprotein ILTAT 1.3 from Trypanosoma brucei brucei.